The primary structure comprises 230 residues: Probable nicotinate-nucleotide adenylyltransferase (230 aa).

It belongs to the NadD family.

It carries out the reaction nicotinate beta-D-ribonucleotide + ATP + H(+) = deamido-NAD(+) + diphosphate. It participates in cofactor biosynthesis; NAD(+) biosynthesis; deamido-NAD(+) from nicotinate D-ribonucleotide: step 1/1. Functionally, catalyzes the reversible adenylation of nicotinate mononucleotide (NaMN) to nicotinic acid adenine dinucleotide (NaAD). In Pseudomonas putida (strain ATCC 47054 / DSM 6125 / CFBP 8728 / NCIMB 11950 / KT2440), this protein is Probable nicotinate-nucleotide adenylyltransferase.